Consider the following 1076-residue polypeptide: Protein EXPORTIN 1B (1076 aa).

Residues 37–103 (ADNILRDLKA…KNYISDVIVQ (67 aa)) form the Importin N-terminal domain. HEAT repeat units follow at residues 135-171 (AKWK…EVFD), 232-267 (IFES…LNFG), 282-319 (MNQL…FFTS), 475-514 (DTEK…SMVV), 564-601 (KFLK…KCKR), 613-650 (PFVS…AESD), 683-720 (LKEP…IFLD), 757-794 (REIL…DYAR), 799-836 (ARES…CTLE), 895-935 (ETGL…VLTD), and 943-988 (KLHV…YTTK).

This sequence belongs to the exportin family. Present in mature pollen grains, unpollinated pistils, and 2-week-old seedlings.

The protein localises to the nucleus. Its subcellular location is the nuclear pore complex. The protein resides in the nucleus membrane. Functionally, receptor for the leucine-rich nuclear export signal (NES). Binds cooperatively to the NES on its target protein and to the small GTPase Ran in its active GTP-bound form. Required for the maternal-to-embryonic transition and during gametophyte development. In Arabidopsis thaliana (Mouse-ear cress), this protein is Protein EXPORTIN 1B.